The chain runs to 502 residues: ATP synthase subunit alpha, chloroplastic (502 aa).

170-177 provides a ligand contact to ATP; it reads GDRQTGKT.

Belongs to the ATPase alpha/beta chains family. In terms of assembly, F-type ATPases have 2 components, CF(1) - the catalytic core - and CF(0) - the membrane proton channel. CF(1) has five subunits: alpha(3), beta(3), gamma(1), delta(1), epsilon(1). CF(0) has four main subunits: a, b, b' and c.

Its subcellular location is the plastid. It is found in the chloroplast thylakoid membrane. The catalysed reaction is ATP + H2O + 4 H(+)(in) = ADP + phosphate + 5 H(+)(out). In terms of biological role, produces ATP from ADP in the presence of a proton gradient across the membrane. The alpha chain is a regulatory subunit. This is ATP synthase subunit alpha, chloroplastic from Tupiella akineta (Green alga).